We begin with the raw amino-acid sequence, 137 residues long: Peptide methionine sulfoxide reductase MsrB (137 aa).

One can recognise a MsrB domain in the interval 7–129; that stretch reads AEELKKKLSE…NSASLAFSDE (123 aa). Residues Cys-46, Cys-49, Cys-95, and Cys-98 each contribute to the Zn(2+) site. Cys-118 (nucleophile) is an active-site residue.

It belongs to the MsrB Met sulfoxide reductase family. Requires Zn(2+) as cofactor.

The enzyme catalyses L-methionyl-[protein] + [thioredoxin]-disulfide + H2O = L-methionyl-(R)-S-oxide-[protein] + [thioredoxin]-dithiol. In Salmonella dublin (strain CT_02021853), this protein is Peptide methionine sulfoxide reductase MsrB.